Here is a 277-residue protein sequence, read N- to C-terminus: Large ribosomal subunit protein uL2 (277 aa).

Residues 222 to 265 form a disordered region; it reads GVAMNPIDHPHGGGEGRTSGGRHPVTPWGKPTKGKKTRTNKSTD.

The protein belongs to the universal ribosomal protein uL2 family. Part of the 50S ribosomal subunit. Forms a bridge to the 30S subunit in the 70S ribosome.

Functionally, one of the primary rRNA binding proteins. Required for association of the 30S and 50S subunits to form the 70S ribosome, for tRNA binding and peptide bond formation. It has been suggested to have peptidyltransferase activity; this is somewhat controversial. Makes several contacts with the 16S rRNA in the 70S ribosome. This chain is Large ribosomal subunit protein uL2, found in Bradyrhizobium sp. (strain BTAi1 / ATCC BAA-1182).